Here is a 571-residue protein sequence, read N- to C-terminus: Dihydroxy-acid dehydratase (571 aa).

C56 is a [2Fe-2S] cluster binding site. D88 serves as a coordination point for Mg(2+). C129 lines the [2Fe-2S] cluster pocket. 2 residues coordinate Mg(2+): D130 and K131. Residue K131 is modified to N6-carboxylysine. Residue C201 participates in [2Fe-2S] cluster binding. E452 serves as a coordination point for Mg(2+). The Proton acceptor role is filled by S478.

It belongs to the IlvD/Edd family. As to quaternary structure, homodimer. [2Fe-2S] cluster is required as a cofactor. Requires Mg(2+) as cofactor.

The enzyme catalyses (2R)-2,3-dihydroxy-3-methylbutanoate = 3-methyl-2-oxobutanoate + H2O. It carries out the reaction (2R,3R)-2,3-dihydroxy-3-methylpentanoate = (S)-3-methyl-2-oxopentanoate + H2O. It functions in the pathway amino-acid biosynthesis; L-isoleucine biosynthesis; L-isoleucine from 2-oxobutanoate: step 3/4. It participates in amino-acid biosynthesis; L-valine biosynthesis; L-valine from pyruvate: step 3/4. Functions in the biosynthesis of branched-chain amino acids. Catalyzes the dehydration of (2R,3R)-2,3-dihydroxy-3-methylpentanoate (2,3-dihydroxy-3-methylvalerate) into 2-oxo-3-methylpentanoate (2-oxo-3-methylvalerate) and of (2R)-2,3-dihydroxy-3-methylbutanoate (2,3-dihydroxyisovalerate) into 2-oxo-3-methylbutanoate (2-oxoisovalerate), the penultimate precursor to L-isoleucine and L-valine, respectively. The polypeptide is Dihydroxy-acid dehydratase (Streptococcus mutans serotype c (strain ATCC 700610 / UA159)).